A 229-amino-acid polypeptide reads, in one-letter code: MADTLESSLEDPLRSFVRVLEKRDGTVLRLQQYSSGGVGCVVWDAAIVLSKYLETPEFSGDGAHALSRRSVLELGSGTGAVGLMAATLGADVVVTDLEELQDLLKMNINMNKHLVTGSVQAKVLKWGEEIEGFPSPPDFILMADCIYYEESLEPLLKTLKDISGFETCIICCYEQRTMGKNPEIEKKYFELLQLDFDFEKIPLEKHDEEYRSEDIHIIYIRKKKSKFPS.

An N-acetylalanine modification is found at A2. At S8 the chain carries Phosphoserine. Residues W43, 75–77 (GSG), D96, W126, A143, and Y148 contribute to the S-adenosyl-L-methionine site.

This sequence belongs to the methyltransferase superfamily. METTL21 family. Interacts with ALKBH6. Interacts with ASPSCR1 and UBXN6; interaction with ASPSCR1, but not with UBXN6, enhances VCP methylation.

It localises to the cytoplasm. It carries out the reaction L-lysyl-[protein] + 3 S-adenosyl-L-methionine = N(6),N(6),N(6)-trimethyl-L-lysyl-[protein] + 3 S-adenosyl-L-homocysteine + 3 H(+). In terms of biological role, protein N-lysine methyltransferase that specifically trimethylates 'Lys-315' of VCP/p97; this modification may decrease VCP ATPase activity. This Homo sapiens (Human) protein is Protein N-lysine methyltransferase METTL21D (VCPKMT).